Consider the following 118-residue polypeptide: NADH-ubiquinone oxidoreductase chain 3 (118 aa).

The next 3 helical transmembrane spans lie at 5 to 25 (YIYIFIFFWGAFFISCLLIFL), 62 to 82 (LIAILFMIFDLEIMYLFPWSI), and 87 to 107 (GSFFGVWAIFLFLIILTVGFI).

It belongs to the complex I subunit 3 family.

Its subcellular location is the mitochondrion membrane. The enzyme catalyses a ubiquinone + NADH + 5 H(+)(in) = a ubiquinol + NAD(+) + 4 H(+)(out). Its function is as follows. Core subunit of the mitochondrial membrane respiratory chain NADH dehydrogenase (Complex I) that is believed to belong to the minimal assembly required for catalysis. Complex I functions in the transfer of electrons from NADH to the respiratory chain. The immediate electron acceptor for the enzyme is believed to be ubiquinone. This chain is NADH-ubiquinone oxidoreductase chain 3 (ND3), found in Acanthamoeba castellanii (Amoeba).